Consider the following 336-residue polypeptide: Ketol-acid reductoisomerase (NADP(+)) (336 aa).

Residues 1 to 181 (MNVYYDKDCN…GGGRTGIIET (181 aa)) enclose the KARI N-terminal Rossmann domain. Residues 24 to 27 (YGSQ), Arg47, Ser50, Ser52, and 82 to 85 (DEFQ) contribute to the NADP(+) site. His107 is an active-site residue. NADP(+) is bound at residue Gly133. A KARI C-terminal knotted domain is found at 182 to 327 (TFQDETETDL…GKLRSMMPWI (146 aa)). Mg(2+) contacts are provided by Asp190, Glu194, Glu226, and Glu230. Ser251 lines the substrate pocket.

Belongs to the ketol-acid reductoisomerase family. Mg(2+) serves as cofactor.

It carries out the reaction (2R)-2,3-dihydroxy-3-methylbutanoate + NADP(+) = (2S)-2-acetolactate + NADPH + H(+). It catalyses the reaction (2R,3R)-2,3-dihydroxy-3-methylpentanoate + NADP(+) = (S)-2-ethyl-2-hydroxy-3-oxobutanoate + NADPH + H(+). Its pathway is amino-acid biosynthesis; L-isoleucine biosynthesis; L-isoleucine from 2-oxobutanoate: step 2/4. It participates in amino-acid biosynthesis; L-valine biosynthesis; L-valine from pyruvate: step 2/4. In terms of biological role, involved in the biosynthesis of branched-chain amino acids (BCAA). Catalyzes an alkyl-migration followed by a ketol-acid reduction of (S)-2-acetolactate (S2AL) to yield (R)-2,3-dihydroxy-isovalerate. In the isomerase reaction, S2AL is rearranged via a Mg-dependent methyl migration to produce 3-hydroxy-3-methyl-2-ketobutyrate (HMKB). In the reductase reaction, this 2-ketoacid undergoes a metal-dependent reduction by NADPH to yield (R)-2,3-dihydroxy-isovalerate. The polypeptide is Ketol-acid reductoisomerase (NADP(+)) (Geotalea daltonii (strain DSM 22248 / JCM 15807 / FRC-32) (Geobacter daltonii)).